Consider the following 88-residue polypeptide: Small ribosomal subunit protein uS17 (88 aa).

Belongs to the universal ribosomal protein uS17 family. In terms of assembly, part of the 30S ribosomal subunit.

Its function is as follows. One of the primary rRNA binding proteins, it binds specifically to the 5'-end of 16S ribosomal RNA. This chain is Small ribosomal subunit protein uS17, found in Pseudomonas putida (strain ATCC 700007 / DSM 6899 / JCM 31910 / BCRC 17059 / LMG 24140 / F1).